Reading from the N-terminus, the 272-residue chain is Probable proteasome subunit beta type-5 (272 aa).

Residues methionine 1–glycine 61 constitute a propeptide, removed in mature form. Catalysis depends on threonine 62, which acts as the Nucleophile.

This sequence belongs to the peptidase T1B family. In terms of assembly, the 26S proteasome consists of a 20S proteasome core and two 19S regulatory subunits. The 20S proteasome core is composed of 28 subunits that are arranged in four stacked rings, resulting in a barrel-shaped structure. The two end rings are each formed by seven alpha subunits, and the two central rings are each formed by seven beta subunits. The catalytic chamber with the active sites is on the inside of the barrel.

It localises to the cytoplasm. It is found in the nucleus. It catalyses the reaction Cleavage of peptide bonds with very broad specificity.. Functionally, the proteasome is a multicatalytic proteinase complex which is characterized by its ability to cleave peptides with Arg, Phe, Tyr, Leu, and Glu adjacent to the leaving group at neutral or slightly basic pH. The proteasome has an ATP-dependent proteolytic activity. The sequence is that of Probable proteasome subunit beta type-5 (pts1) from Schizosaccharomyces pombe (strain 972 / ATCC 24843) (Fission yeast).